Here is a 293-residue protein sequence, read N- to C-terminus: Nucleotide-binding protein Csac_1160 (293 aa).

Residue 11 to 18 participates in ATP binding; it reads GMSGAGKS. 62-65 contacts GTP; it reads DIRG.

This sequence belongs to the RapZ-like family.

Its function is as follows. Displays ATPase and GTPase activities. This Caldicellulosiruptor saccharolyticus (strain ATCC 43494 / DSM 8903 / Tp8T 6331) protein is Nucleotide-binding protein Csac_1160.